Consider the following 884-residue polypeptide: Nonsense-mediated mRNA decay factor EBS1 (884 aa).

Disordered regions lie at residues 596-645 (NSMK…PTMG) and 755-774 (QGGL…NSAY). Positions 633 to 645 (RSSSLDSFSPTMG) are enriched in polar residues. Low complexity predominate over residues 760–772 (SSQQPSSMSSLNS).

The protein belongs to the EST1 family. Interacts with NMD helicase UPF1. Interacts with CDC33.

Its subcellular location is the nucleus. The protein resides in the chromosome. The protein localises to the telomere. It is found in the cytoplasm. It localises to the P-body. Plays a role in nonsense-mediated mRNA decay (NMD). Recruits UPF1 to cytoplasmic mRNA decay bodies (P-bodies). Negative regulator of gene expression. Inhibits translation most likely through effects on eIF-4E (CDC33). Involved in telomere maintenance. The protein is Nonsense-mediated mRNA decay factor EBS1 of Saccharomyces cerevisiae (strain ATCC 204508 / S288c) (Baker's yeast).